A 185-amino-acid polypeptide reads, in one-letter code: Ribosome-recycling factor (185 aa).

K162 carries the N6-acetyllysine modification.

The protein belongs to the RRF family.

The protein localises to the cytoplasm. Its function is as follows. Responsible for the release of ribosomes from messenger RNA at the termination of protein biosynthesis. May increase the efficiency of translation by recycling ribosomes from one round of translation to another. The sequence is that of Ribosome-recycling factor from Shigella boydii serotype 18 (strain CDC 3083-94 / BS512).